We begin with the raw amino-acid sequence, 508 residues long: Kinesin light chain (508 aa).

Residues 34-129 adopt a coiled-coil conformation; it reads IAEVQKDNEK…KKHLEFMASV (96 aa). The tract at residues 156–175 is disordered; the sequence is DEENEDRHNMSPTPPSQFAN. Thr168 is subject to Phosphothreonine. TPR repeat units follow at residues 186 to 219, 228 to 261, 270 to 303, 312 to 345, 354 to 387, and 437 to 470; these read LRTLHNLVIQYASQGRYEVAVPLCKQALEDLERT, ATMLNILALVYRDQNKYKEAANLLNDALSIRGKT, AATLNNLAVLYGKRGKYKDAEPLCKRALEIREKV, AKQLNNLALLCQNQGKYDEVEKYYQRALDIYESK, AKTKNNLAGCYLKQGRYTEAEILYKQVLTRAHER, and TTTLKNLGALYRRQGMFEAAETLEDCAMRSKKEA. Thr477 carries the phosphothreonine modification. Phosphoserine is present on residues Ser480 and Ser485. The interval 484-508 is disordered; it reads TSNEKRRSKAIKEDLDFSEEKNAKP. Positions 493-508 are enriched in basic and acidic residues; the sequence is AIKEDLDFSEEKNAKP.

The protein belongs to the kinesin light chain family. Oligomeric complex composed of two heavy chains and two light chains. In terms of tissue distribution, ubiquitous.

The protein localises to the cytoplasm. Its subcellular location is the cytoskeleton. In terms of biological role, kinesin is a microtubule-associated force-producing protein that may play a role in organelle transport. The light chain may function in coupling of cargo to the heavy chain or in the modulation of its ATPase activity. The polypeptide is Kinesin light chain (Klc) (Drosophila melanogaster (Fruit fly)).